Consider the following 567-residue polypeptide: uncharacterized protein (567 aa).

This sequence belongs to the protein kinase superfamily. ADCK protein kinase family.

This is an uncharacterized protein from Synechocystis sp. (strain ATCC 27184 / PCC 6803 / Kazusa).